Here is a 57-residue protein sequence, read N- to C-terminus: Small ribosomal subunit protein eS31 (57 aa).

Positions 29, 32, 47, and 50 each coordinate Zn(2+). The C4-type zinc finger occupies 29–50 (CSRCGKGTYMSEHKDRNTCGKC).

The protein belongs to the eukaryotic ribosomal protein eS31 family. As to quaternary structure, part of the 30S ribosomal subunit. The cofactor is Zn(2+).

The polypeptide is Small ribosomal subunit protein eS31 (Nitrosopumilus maritimus (strain SCM1)).